Consider the following 78-residue polypeptide: Musculoskeletal embryonic nuclear protein 1 (78 aa).

Disordered regions lie at residues 1–33 (MSQPDPVKKKRPPVKEEDLKGARGNLSKNQEIK) and 45–78 (QMGSAAPSIFSRARTGSETVFEKSKDEPPKSVFG). The Nuclear localization signal signature appears at 6–14 (PVKKKRPPV). Basic and acidic residues predominate over residues 64–78 (VFEKSKDEPPKSVFG).

Belongs to the MUSTN1 family. In terms of tissue distribution, predominantly expressed in heart and skeletal muscle. Detected in skeletal muscle satellite cells where expression increases with cell proliferation.

The protein resides in the nucleus. Functionally, promotes the differentiation and proliferation of skeletal muscle satellite cells. This Gallus gallus (Chicken) protein is Musculoskeletal embryonic nuclear protein 1 (MUSTN1).